A 192-amino-acid polypeptide reads, in one-letter code: Peptidyl-tRNA hydrolase (192 aa).

Histidine 17 serves as a coordination point for tRNA. Histidine 22 functions as the Proton acceptor in the catalytic mechanism. The tRNA site is built by phenylalanine 68, asparagine 70, and asparagine 116.

It belongs to the PTH family. As to quaternary structure, monomer.

It localises to the cytoplasm. The enzyme catalyses an N-acyl-L-alpha-aminoacyl-tRNA + H2O = an N-acyl-L-amino acid + a tRNA + H(+). Its function is as follows. Hydrolyzes ribosome-free peptidyl-tRNAs (with 1 or more amino acids incorporated), which drop off the ribosome during protein synthesis, or as a result of ribosome stalling. Catalyzes the release of premature peptidyl moieties from peptidyl-tRNA molecules trapped in stalled 50S ribosomal subunits, and thus maintains levels of free tRNAs and 50S ribosomes. The sequence is that of Peptidyl-tRNA hydrolase from Stenotrophomonas maltophilia (strain R551-3).